The primary structure comprises 709 residues: MAQEVLKDLNKVRNIGIMAHIDAGKTTTTERILFYTGINRKVGETHDGGATTDWMEQEKERGITITSAAVTCFWDNNQVNIIDTPGHVDFTVEVERSLRVLDGAVAVFDGKEGVEPQSEQVWRQATKYDVPRICFVNKMDKLGADFYFTVGTIEDRLGAKPLVMQLPIGAEDNFDGVIDLLEMKALTWRGVTPIGTEATVEEIPAELADRAAEYREKLLETVAESDEELMEKYFGGEELSIAEIKAAIRKMVVNSEIYPVYCGTAYKNKGVQPLLDAVVDFLPSPLDLGETKGTDVKDPEKVLTRKPSDEEPLSALAFKIAAHPFFGKLTFVRLYSGKVEPGEQVLNSTKNKKERIGKLFQMHANKENPVEVAHAGNIYAFIGLKDTTTGDTLCDANAPIILESMDFPDPVIKVAIEPKTKSDQEKLGVAIQKLAEEDPTFTVELDDESGQTVIGGMGELHLDVLVDRMKREFKVEANIGDPQVAYRETIRKPVESLSYTHKKQTGGSGQFAKVIITIEPYAPAPEELEEGESAIYKFENAVTGGRVPREYIPSVDAGIQDAMQYGFLAGYPLVNVKATLEDGAYHDVDSSEMAFKLAGSQAFKEAVAKAKPVLLEPIMSVEITTPEEYMGEVIGDVNARRGQIASMDDRAGAKIVKAKVPLSQMFGYVGDLRSKTQGRANYSMIFDSYAEVPANVAADVIAERNGTAS.

The tr-type G domain maps to 10–286 (NKVRNIGIMA…AVVDFLPSPL (277 aa)). Residues 19–26 (AHIDAGKT), 83–87 (DTPGH), and 137–140 (NKMD) each bind GTP.

Belongs to the TRAFAC class translation factor GTPase superfamily. Classic translation factor GTPase family. EF-G/EF-2 subfamily.

Its subcellular location is the cytoplasm. Catalyzes the GTP-dependent ribosomal translocation step during translation elongation. During this step, the ribosome changes from the pre-translocational (PRE) to the post-translocational (POST) state as the newly formed A-site-bound peptidyl-tRNA and P-site-bound deacylated tRNA move to the P and E sites, respectively. Catalyzes the coordinated movement of the two tRNA molecules, the mRNA and conformational changes in the ribosome. The polypeptide is Elongation factor G (Corynebacterium glutamicum (strain R)).